We begin with the raw amino-acid sequence, 54 residues long: Large ribosomal subunit protein bL32c (54 aa).

It belongs to the bacterial ribosomal protein bL32 family.

It is found in the plastid. Its subcellular location is the chloroplast. The chain is Large ribosomal subunit protein bL32c from Lactuca sativa (Garden lettuce).